A 618-amino-acid chain; its full sequence is V-type proton ATPase catalytic subunit A (618 aa).

An ATP-binding site is contributed by 251–258 (GAFGCGKT).

Belongs to the ATPase alpha/beta chains family. As to quaternary structure, V-ATPase is a heteromultimeric enzyme composed of a peripheral catalytic V1 complex (main components: subunits A, B, C, D, E, and F) attached to an integral membrane V0 proton pore complex (main component: the proteolipid protein).

The catalysed reaction is ATP + H2O + 4 H(+)(in) = ADP + phosphate + 5 H(+)(out). Functionally, catalytic subunit of the peripheral V1 complex of vacuolar ATPase. V-ATPase vacuolar ATPase is responsible for acidifying a variety of intracellular compartments in eukaryotic cells. The sequence is that of V-type proton ATPase catalytic subunit A (vatA) from Dictyostelium discoideum (Social amoeba).